Reading from the N-terminus, the 403-residue chain is 4-hydroxy-3-methylbut-2-enyl diphosphate reductase (403 aa).

C66 contacts [4Fe-4S] cluster. H96 is a (2E)-4-hydroxy-3-methylbut-2-enyl diphosphate binding site. H96 contributes to the dimethylallyl diphosphate binding site. Position 96 (H96) interacts with isopentenyl diphosphate. Position 157 (C157) interacts with [4Fe-4S] cluster. H185 contributes to the (2E)-4-hydroxy-3-methylbut-2-enyl diphosphate binding site. H185 contributes to the dimethylallyl diphosphate binding site. H185 is a binding site for isopentenyl diphosphate. The Proton donor role is filled by E187. T250 provides a ligand contact to (2E)-4-hydroxy-3-methylbut-2-enyl diphosphate. C288 contacts [4Fe-4S] cluster. The (2E)-4-hydroxy-3-methylbut-2-enyl diphosphate site is built by S317, S318, N319, and S379. S317, S318, N319, and S379 together coordinate dimethylallyl diphosphate. Isopentenyl diphosphate is bound by residues S317, S318, N319, and S379.

It belongs to the IspH family. [4Fe-4S] cluster is required as a cofactor.

It carries out the reaction isopentenyl diphosphate + 2 oxidized [2Fe-2S]-[ferredoxin] + H2O = (2E)-4-hydroxy-3-methylbut-2-enyl diphosphate + 2 reduced [2Fe-2S]-[ferredoxin] + 2 H(+). The enzyme catalyses dimethylallyl diphosphate + 2 oxidized [2Fe-2S]-[ferredoxin] + H2O = (2E)-4-hydroxy-3-methylbut-2-enyl diphosphate + 2 reduced [2Fe-2S]-[ferredoxin] + 2 H(+). It functions in the pathway isoprenoid biosynthesis; dimethylallyl diphosphate biosynthesis; dimethylallyl diphosphate from (2E)-4-hydroxy-3-methylbutenyl diphosphate: step 1/1. The protein operates within isoprenoid biosynthesis; isopentenyl diphosphate biosynthesis via DXP pathway; isopentenyl diphosphate from 1-deoxy-D-xylulose 5-phosphate: step 6/6. In terms of biological role, catalyzes the conversion of 1-hydroxy-2-methyl-2-(E)-butenyl 4-diphosphate (HMBPP) into a mixture of isopentenyl diphosphate (IPP) and dimethylallyl diphosphate (DMAPP). Acts in the terminal step of the DOXP/MEP pathway for isoprenoid precursor biosynthesis. The protein is 4-hydroxy-3-methylbut-2-enyl diphosphate reductase of Picosynechococcus sp. (strain ATCC 27264 / PCC 7002 / PR-6) (Agmenellum quadruplicatum).